The sequence spans 150 residues: Aspartate 1-decarboxylase 1 (150 aa).

The active-site Schiff-base intermediate with substrate; via pyruvic acid is Ser-24. At Ser-24 the chain carries Pyruvic acid (Ser). Thr-56 is a binding site for substrate. The active-site Proton donor is the Tyr-57. 72–74 (GAA) is a substrate binding site.

The protein belongs to the PanD family. As to quaternary structure, heterooctamer of four alpha and four beta subunits. The cofactor is pyruvate. Is synthesized initially as an inactive proenzyme, which is activated by self-cleavage at a specific serine bond to produce a beta-subunit with a hydroxyl group at its C-terminus and an alpha-subunit with a pyruvoyl group at its N-terminus.

It localises to the cytoplasm. It carries out the reaction L-aspartate + H(+) = beta-alanine + CO2. The protein operates within cofactor biosynthesis; (R)-pantothenate biosynthesis; beta-alanine from L-aspartate: step 1/1. In terms of biological role, catalyzes the pyruvoyl-dependent decarboxylation of aspartate to produce beta-alanine. The protein is Aspartate 1-decarboxylase 1 of Mesorhizobium japonicum (strain LMG 29417 / CECT 9101 / MAFF 303099) (Mesorhizobium loti (strain MAFF 303099)).